The primary structure comprises 680 residues: Probable galacturonosyltransferase 3 (680 aa).

At 1–6 (MTTFST) the chain is on the cytoplasmic side. Residues 7 to 27 (CAAFLSLVVVLHAVHVGGAIL) form a helical; Signal-anchor for type II membrane protein membrane-spanning segment. Topologically, residues 28–680 (ESQAPHRELK…PYLRRCDINE (653 aa)) are lumenal. Positions 118–146 (SFQNDTGMEDNASHSTTNQTDESENQFPN) are disordered. Asparagine 121, asparagine 128, asparagine 135, asparagine 239, asparagine 386, asparagine 438, asparagine 545, asparagine 578, asparagine 610, and asparagine 631 each carry an N-linked (GlcNAc...) asparagine glycan. Positions 130 to 145 (SHSTTNQTDESENQFP) are enriched in polar residues.

The protein belongs to the glycosyltransferase 8 family. In terms of tissue distribution, expressed in roots, inflorescences, siliques, leaves and stems.

It is found in the golgi apparatus membrane. The protein operates within glycan metabolism; pectin biosynthesis. Its function is as follows. May be involved in pectin and/or xylans biosynthesis in cell walls. This Arabidopsis thaliana (Mouse-ear cress) protein is Probable galacturonosyltransferase 3 (GAUT3).